Here is a 243-residue protein sequence, read N- to C-terminus: UMP-CMP kinase 2 (243 aa).

Residue 69 to 74 (GSGKGT) participates in ATP binding. The tract at residues 89–118 (SAGDLLRSEISTGREKGELILNIIKEGKIV) is NMP. A ribonucleoside 5'-phosphate contacts are provided by residues arginine 95, 116–118 (KIV), and 143–146 (GFPR). Asparagine 150 provides a ligand contact to CMP. The LID stretch occupies residues 181-189 (GRNQGRVDD). Arginine 182 contributes to the ATP binding site. Residues arginine 186 and arginine 197 each coordinate a ribonucleoside 5'-phosphate.

The protein belongs to the adenylate kinase family. UMP-CMP kinase subfamily. In terms of assembly, monomer. It depends on Mg(2+) as a cofactor.

It localises to the cytoplasm. It is found in the nucleus. It catalyses the reaction UMP + ATP = UDP + ADP. It carries out the reaction CMP + ATP = CDP + ADP. The enzyme catalyses dCMP + ATP = dCDP + ADP. Functionally, catalyzes the phosphorylation of pyrimidine nucleoside monophosphates at the expense of ATP. Plays an important role in de novo pyrimidine nucleotide biosynthesis. Has preference for UMP and CMP as phosphate acceptors. This is UMP-CMP kinase 2 from Oryza sativa subsp. japonica (Rice).